We begin with the raw amino-acid sequence, 151 residues long: Small ribosomal subunit protein uS15 (151 aa).

The segment covering M1–R11 has biased composition (basic residues). Residues M1 to T24 form a disordered region.

It belongs to the universal ribosomal protein uS15 family. In terms of assembly, part of the 30S ribosomal subunit.

The polypeptide is Small ribosomal subunit protein uS15 (Pyrobaculum calidifontis (strain DSM 21063 / JCM 11548 / VA1)).